Consider the following 104-residue polypeptide: Flagellar hook-basal body complex protein FliE (104 aa).

Belongs to the FliE family.

It is found in the bacterial flagellum basal body. The chain is Flagellar hook-basal body complex protein FliE from Escherichia fergusonii (strain ATCC 35469 / DSM 13698 / CCUG 18766 / IAM 14443 / JCM 21226 / LMG 7866 / NBRC 102419 / NCTC 12128 / CDC 0568-73).